Reading from the N-terminus, the 833-residue chain is Leucine--tRNA ligase (833 aa).

Residues 41 to 52 (PYPSGAGLHVGH) carry the 'HIGH' region motif. Residues 610–614 (KMSKS) carry the 'KMSKS' region motif. Lys613 provides a ligand contact to ATP.

This sequence belongs to the class-I aminoacyl-tRNA synthetase family.

The protein localises to the cytoplasm. It catalyses the reaction tRNA(Leu) + L-leucine + ATP = L-leucyl-tRNA(Leu) + AMP + diphosphate. The polypeptide is Leucine--tRNA ligase (Streptococcus pneumoniae serotype 19F (strain G54)).